An 84-amino-acid polypeptide reads, in one-letter code: Small ribosomal subunit protein uS17 (84 aa).

This sequence belongs to the universal ribosomal protein uS17 family. As to quaternary structure, part of the 30S ribosomal subunit.

In terms of biological role, one of the primary rRNA binding proteins, it binds specifically to the 5'-end of 16S ribosomal RNA. This is Small ribosomal subunit protein uS17 from Clostridium botulinum (strain Alaska E43 / Type E3).